A 107-amino-acid polypeptide reads, in one-letter code: MGRKRLITDSYPVVKRREGPAGHSKGELAPELGEEPQPRDEEEAELELLRQFDLAWQYGPCTGITRLQRWCRAKQMGLEPPPEVWQVLKTHPGDPRFQCSLWHLYPL.

Residues 1-16 (MGRKRLITDSYPVVKR) carry the PCNA-interaction protein motif (PIP box) motif. A disordered region spans residues 1-44 (MGRKRLITDSYPVVKRREGPAGHSKGELAPELGEEPQPRDEEEA). Residues 15 to 28 (KRREGPAGHSKGEL) are compositionally biased toward basic and acidic residues.

This sequence belongs to the DNA polymerase delta subunit 4 family. Component of the tetrameric DNA polymerase delta complex (Pol-delta4), which consists of POLD1/p125, POLD2/p50, POLD3/p66/p68 and POLD4/p12, with POLD1 bearing DNA polymerase and 3' to 5' proofreading exonuclease activities. Within this complex, directly interacts with POLD1 and POLD2. Directly interacts with PCNA, as do POLD1 and POLD3; this interaction stimulates Pol-delta4 polymerase activity. As POLD1 and POLD2, directly interacts with WRNIP1; this interaction stimulates DNA polymerase delta-mediated DNA synthesis, independently of the presence of PCNA. This stimulation may be due predominantly to an increase of initiation frequency and also to increased processivity. Upon genotoxic stress induced by DNA damaging agents or by replication stress, POLD4 is proteolytically degraded and Pol-delta4 is converted into a trimeric form of the complex (Pol-delta3) which has an increased proofreading activity. The DNA polymerase delta complex interacts with POLDIP2; this interaction is probably mediated through direct binding to POLD2. In terms of processing, ubiquitinated; undergoes 'Lys-48'-linked ubiquitination in response to UV irradiation, leading to proteasomal degradation. This modification is partly mediated by RNF8 and by the DCX(DTL) E3 ubiquitin ligase complex (also called CRL4(CDT2)). Efficient degradation requires the presence of PCNA and is required for the inhibition of fork progression after DNA damage.

It is found in the nucleus. Functionally, as a component of the tetrameric DNA polymerase delta complex (Pol-delta4), plays a role in high fidelity genome replication and repair. Within this complex, increases the rate of DNA synthesis and decreases fidelity by regulating POLD1 polymerase and proofreading 3' to 5' exonuclease activity. Pol-delta4 participates in Okazaki fragment processing, through both the short flap pathway, as well as a nick translation system. Under conditions of DNA replication stress, required for the repair of broken replication forks through break-induced replication (BIR), a mechanism that may induce segmental genomic duplications of up to 200 kb. Involved in Pol-delta4 translesion synthesis (TLS) of templates carrying O6-methylguanine or abasic sites. Its degradation in response to DNA damage is required for the inhibition of fork progression and cell survival. This is DNA polymerase delta subunit 4 (POLD4) from Homo sapiens (Human).